The chain runs to 74 residues: Exodeoxyribonuclease 7 small subunit (74 aa).

This sequence belongs to the XseB family. Heterooligomer composed of large and small subunits.

The protein resides in the cytoplasm. It carries out the reaction Exonucleolytic cleavage in either 5'- to 3'- or 3'- to 5'-direction to yield nucleoside 5'-phosphates.. Its function is as follows. Bidirectionally degrades single-stranded DNA into large acid-insoluble oligonucleotides, which are then degraded further into small acid-soluble oligonucleotides. The sequence is that of Exodeoxyribonuclease 7 small subunit from Vesicomyosocius okutanii subsp. Calyptogena okutanii (strain HA).